A 496-amino-acid polypeptide reads, in one-letter code: Mothers against decapentaplegic homolog 6 (496 aa).

The span at 1 to 15 (MFRSKRSGLVRRLWR) shows a compositional bias: basic residues. Disordered regions lie at residues 1–116 (MFRS…PGWL) and 136–156 (GAPRDASDPLAGAALEPAGGG). Residues Arg-75 and Arg-82 each carry the dimethylated arginine; alternate modification. Residues Arg-75 and Arg-82 each carry the omega-N-methylarginine; alternate modification. Residues 148–275 (AALEPAGGGR…FSRLCGPESP (128 aa)) form the MH1 domain. Lys-173 is covalently cross-linked (Glycyl lysine isopeptide (Lys-Gly) (interchain with G-Cter in ubiquitin)). Positions 205, 247, 260, and 265 each coordinate Zn(2+). One can recognise an MH2 domain in the interval 331–496 (WCSVAYWEHR…WLEILLNNPR (166 aa)). Phosphoserine; by PRKX; in vitro is present on Ser-435.

This sequence belongs to the dwarfin/SMAD family. Interacts with NEDD4L. Interacts with WWP1. Interacts with STAMBP and PRKX. Interacts with RNF111 and AXIN1. Interacts with TGF-beta type I receptor superfamily members, including ACVR1B, BMPR1B and TGFBR1. In response to BMP2, but not to TGFB treatment, interacts with SMAD1, but not with SMAD2, nor with SMAD4; this interaction may inhibit SMAD1 binding to SMAD4. Interacts with HOXC8 and HOXC9. Interacts with PELI1; this interaction interferes with PELI1 complex formation with TRAF6, IRAK1, IRAK4 and MYD88 in response to IL1B and hence negatively regulates IL1R-TLR signaling. Interacts with TSC22D1/TSC-22. In terms of processing, phosphorylated by BMP type 1 receptor kinase and by PRKX. Post-translationally, monoubiquitinated at Lys-173 by the E2/E3 hybrid ubiquitin-protein ligase UBE2O, leading to reduced binding affinity for the activated BMP type I receptor ACVR1/ALK2, thereby enhancing BMP7 and regulating adipocyte differentiation. Ubiquitinated by WWP1. Ubiquitinated by ARK2C, promoting proteasomal degradation, leading to enhance the BMP-Smad signaling. Arginine methylation by PRMT1, which is recruited by BMPR2, initiates BMP-Induced signaling and induces dissociation from the BMPR1B receptor at the cell surface leading to derepress downstream Smad1/Smad5 signaling. As to expression, expressed in the brain, heart, ovary, peripheral blood leukocytes, small intestine, spleen, thymus, bone marrow, fetal liver and lymph nodes.

It is found in the nucleus. Its function is as follows. Transforming growth factor-beta superfamily receptors signaling occurs through the Smad family of intracellular mediators. SMAD6 is an inhibitory Smad (i-Smad) that negatively regulates signaling downstream of type I transforming growth factor-beta. Acts as a mediator of TGF-beta and BMP anti-inflammatory activities. Suppresses IL1R-TLR signaling through its direct interaction with PEL1, preventing NF-kappa-B activation, nuclear transport and NF-kappa-B-mediated expression of pro-inflammatory genes. Blocks the BMP-SMAD1 signaling pathway by competing with SMAD4 for receptor-activated SMAD1-binding. Binds to regulatory elements in target promoter regions. The polypeptide is Mothers against decapentaplegic homolog 6 (SMAD6) (Homo sapiens (Human)).